Here is a 447-residue protein sequence, read N- to C-terminus: tRNA-2-methylthio-N(6)-dimethylallyladenosine synthase (447 aa).

Positions 8 to 126 constitute an MTTase N-terminal domain; it reads KKVVTLAYGC…FQRLLEEAEE (119 aa). Residues cysteine 17, cysteine 53, cysteine 87, cysteine 162, cysteine 166, and cysteine 169 each contribute to the [4Fe-4S] cluster site. The Radical SAM core domain occupies 148–378; sequence AKGKLKAYVN…ITVQNAQSLA (231 aa). A TRAM domain is found at 381–444; the sequence is QEMIGKTCEV…SWTLFGECRA (64 aa).

The protein belongs to the methylthiotransferase family. MiaB subfamily. Monomer. [4Fe-4S] cluster is required as a cofactor.

It is found in the cytoplasm. The enzyme catalyses N(6)-dimethylallyladenosine(37) in tRNA + (sulfur carrier)-SH + AH2 + 2 S-adenosyl-L-methionine = 2-methylsulfanyl-N(6)-dimethylallyladenosine(37) in tRNA + (sulfur carrier)-H + 5'-deoxyadenosine + L-methionine + A + S-adenosyl-L-homocysteine + 2 H(+). Catalyzes the methylthiolation of N6-(dimethylallyl)adenosine (i(6)A), leading to the formation of 2-methylthio-N6-(dimethylallyl)adenosine (ms(2)i(6)A) at position 37 in tRNAs that read codons beginning with uridine. The chain is tRNA-2-methylthio-N(6)-dimethylallyladenosine synthase from Desulfitobacterium hafniense (strain Y51).